The chain runs to 206 residues: Interleukin-24 (206 aa).

A signal peptide spans 1-51; sequence MNFQQRLQSLWTLARPFCPPLLATASQMQMVVLPCLGFTLLLWSQVSGAQG. Cysteine 59 and cysteine 106 are joined by a disulfide. N-linked (GlcNAc...) asparagine glycosylation is found at asparagine 85 and asparagine 99. Residue lysine 122 forms a Glycyl lysine isopeptide (Lys-Gly) (interchain with G-Cter in ubiquitin) linkage. N-linked (GlcNAc...) asparagine glycosylation is present at asparagine 126.

The protein belongs to the IL-10 family. Post-translationally, glycosylated. In terms of processing, ubiquitination at Lys-122 promotes proteasomal degradation. As to expression, up-regulated in melanoma cells induced to terminally differentiate.

The protein resides in the secreted. Its function is as follows. Multifunctional cytokine mainly produced by T-cells that plays a regulatory role in immune response, tissue homeostasis, host defense, and oncogenesis. Possesses antiviral functions and induces the type I interferon response during influenza infection. Signals through two receptor complexes IL20RA/IL20RB or IL20RB/IL22RA1. In turn, stimulates the JAK1-STAT3 and MAPK pathways and promotes the secretion of pro-inflammatory mediators including IL8 and MMP1. Intracellularly, maintains endoplasmic reticulum homeostasis by restricting the eIF2alpha-CHOP pathway-mediated stress signal. In addition, acts as a quality control mechanism for the ubiquitin proteasome system by alerting the cell to proteasome dysfunction through activation of PKR/EIF2AK2. This is Interleukin-24 (IL24) from Homo sapiens (Human).